An 87-amino-acid chain; its full sequence is U3-theraphotoxin-Hhn1a 10 (87 aa).

An N-terminal signal peptide occupies residues 1–24 (MVNMEASMFLTFAGLVLLFVVCYA). Positions 25–52 (SESEEKEFPKEMLSSIFAVDNDFKQEER) are excised as a propeptide. Disulfide bonds link Cys54–Cys67, Cys61–Cys72, and Cys66–Cys79.

This sequence belongs to the neurotoxin 10 (Hwtx-1) family. 51 (Hntx-8) subfamily. Hntx-8 sub-subfamily. As to expression, expressed by the venom gland.

Its subcellular location is the secreted. Ion channel inhibitor. The sequence is that of U3-theraphotoxin-Hhn1a 10 from Cyriopagopus hainanus (Chinese bird spider).